Consider the following 481-residue polypeptide: F-box/LRR-repeat protein At3g03360 (481 aa).

Positions M1–S28 are disordered. Low complexity predominate over residues A14–S28. Residues G36–D84 enclose the F-box domain. 5 LRR repeats span residues S118–L145, H196–F221, E295–A320, I350–P375, and R413–V439.

The chain is F-box/LRR-repeat protein At3g03360 from Arabidopsis thaliana (Mouse-ear cress).